We begin with the raw amino-acid sequence, 260 residues long: Ribonuclease HII (260 aa).

Residues 75–260 enclose the RNase H type-2 domain; sequence ELIAGVDEVG…FEPIKSIIKK (186 aa). A divalent metal cation contacts are provided by Asp81, Glu82, and Asp173.

The protein belongs to the RNase HII family. It depends on Mn(2+) as a cofactor. Requires Mg(2+) as cofactor.

It is found in the cytoplasm. The catalysed reaction is Endonucleolytic cleavage to 5'-phosphomonoester.. Its function is as follows. Endonuclease that specifically degrades the RNA of RNA-DNA hybrids. This Streptococcus thermophilus (strain CNRZ 1066) protein is Ribonuclease HII.